The sequence spans 331 residues: Cytosolic Fe-S cluster assembly factor NBP35 (331 aa).

Residues Met1–Lys10 show a composition bias toward polar residues. The tract at residues Met1–Gly32 is disordered. [4Fe-4S] cluster is bound by residues Cys21, Cys35, Cys38, and Cys44. Position 75 to 82 (Gly75 to Ser82) interacts with ATP. Residues Cys249 and Cys252 each coordinate [4Fe-4S] cluster.

Belongs to the Mrp/NBP35 ATP-binding proteins family. NUBP1/NBP35 subfamily. In terms of assembly, heterotetramer of 2 NBP35 and 2 CFD1 chains. [4Fe-4S] cluster is required as a cofactor.

The protein resides in the cytoplasm. Its subcellular location is the nucleus. Component of the cytosolic iron-sulfur (Fe/S) protein assembly (CIA) machinery. Required for maturation of extramitochondrial Fe-S proteins. The NBP35-CFD1 heterotetramer forms a Fe-S scaffold complex, mediating the de novo assembly of an Fe-S cluster and its transfer to target apoproteins. Required for biogenesis and export of both ribosomal subunits, which may reflect a role in assembly of the Fe/S clusters in RLI1, a protein which performs rRNA processing and ribosome export. This is Cytosolic Fe-S cluster assembly factor NBP35 from Candida albicans (strain SC5314 / ATCC MYA-2876) (Yeast).